Reading from the N-terminus, the 138-residue chain is UPF0201 protein PYRAB09730 (138 aa).

Belongs to the UPF0201 family.

The polypeptide is UPF0201 protein PYRAB09730 (Pyrococcus abyssi (strain GE5 / Orsay)).